A 488-amino-acid polypeptide reads, in one-letter code: Rhamnulokinase (488 aa).

Residue 11-15 (ASSGR) coordinates ATP. Substrate is bound by residues alanine 79 and 234–236 (HDT). The Proton acceptor role is filled by aspartate 235. Threonine 257 lines the ATP pocket. A substrate-binding site is contributed by asparagine 294. ATP-binding residues include glutamine 302 and glycine 401.

It belongs to the rhamnulokinase family. Mg(2+) serves as cofactor.

The catalysed reaction is L-rhamnulose + ATP = L-rhamnulose 1-phosphate + ADP + H(+). It functions in the pathway carbohydrate degradation; L-rhamnose degradation; glycerone phosphate from L-rhamnose: step 2/3. In terms of biological role, involved in the catabolism of L-rhamnose (6-deoxy-L-mannose). Catalyzes the transfer of the gamma-phosphate group from ATP to the 1-hydroxyl group of L-rhamnulose to yield L-rhamnulose 1-phosphate. The polypeptide is Rhamnulokinase (Lactiplantibacillus plantarum (strain ATCC BAA-793 / NCIMB 8826 / WCFS1) (Lactobacillus plantarum)).